The sequence spans 304 residues: Probable WRKY transcription factor 29 (304 aa).

2 disordered regions span residues 76 to 96 and 185 to 236; these read LPEDSKPFRDDKKQRSHGCLL and YTNE…IPSA. Positions 78 to 88 are enriched in basic and acidic residues; the sequence is EDSKPFRDDKK. A DNA-binding region (WRKY) is located at residues 128–194; that stretch reads KEENLLSDAW…YTNEHNHELP (67 aa). Polar residues-rich tracts occupy residues 196-213 and 225-236; these read RRNSLAGSTRAKTSQPKP and SSPTSNPMIPSA.

This sequence belongs to the WRKY group II-e family.

The protein resides in the nucleus. Functionally, transcription factor involved in the expression of defense genes in innate immune response of plants. Interacts specifically with the W box (5'-(T)TGAC[CT]-3'), a frequently occurring elicitor-responsive cis-acting element. Activates WRKY 22, SIRK and its own promoters. The polypeptide is Probable WRKY transcription factor 29 (WRKY29) (Arabidopsis thaliana (Mouse-ear cress)).